The chain runs to 132 residues: Sec-independent protein translocase protein TatB (132 aa).

A helical transmembrane segment spans residues 2–22; it reads FDGIGFMELLLIGILGLVVLG. Residues 86–132 form a disordered region; it reads LKSAAQSVNRPYKVEDISPASSSAPVDPAPTETKTAETSANSEKPNG. Residues 103-115 are compositionally biased toward low complexity; that stretch reads SPASSSAPVDPAP. Positions 117–132 are enriched in polar residues; the sequence is ETKTAETSANSEKPNG.

This sequence belongs to the TatB family. The Tat system comprises two distinct complexes: a TatABC complex, containing multiple copies of TatA, TatB and TatC subunits, and a separate TatA complex, containing only TatA subunits. Substrates initially bind to the TatABC complex, which probably triggers association of the separate TatA complex to form the active translocon.

The protein resides in the cell inner membrane. Part of the twin-arginine translocation (Tat) system that transports large folded proteins containing a characteristic twin-arginine motif in their signal peptide across membranes. Together with TatC, TatB is part of a receptor directly interacting with Tat signal peptides. TatB may form an oligomeric binding site that transiently accommodates folded Tat precursor proteins before their translocation. This Shewanella sediminis (strain HAW-EB3) protein is Sec-independent protein translocase protein TatB.